The chain runs to 46 residues: Myoregulin (46 aa).

Residues 1-21 lie on the Cytoplasmic side of the membrane; sequence MTGKNWILISTTTPKSLEDEI. A helical transmembrane segment spans residues 22–42; sequence VGRLLKILFVIFVDLISIIYV. At 43–46 the chain is on the lumenal side; that stretch reads VITS.

Homooligomer. Monomer. Interacts with ATP2A1/SERCA1. Interacts as a monomer with ATP2A2/SERCA2; the interaction inhibits ATP2A2 activity.

The protein resides in the sarcoplasmic reticulum membrane. Its function is as follows. Inhibits the activity of ATP2A1/SERCA1 ATPase in sarcoplasmic reticulum by decreasing the apparent affinity of the ATPase for Ca(2+), thereby acting as a key regulator of skeletal muscle activity. Its high expression in adult skeletal muscle, suggests that it constitutes the predominant regulator of ATP2A1/SERCA1 in adult skeletal muscle. Also inhibits the activity of ATP2A2/SERCA2 and ATP2A3/SERCA3. The polypeptide is Myoregulin (Homo sapiens (Human)).